We begin with the raw amino-acid sequence, 595 residues long: Actin-histidine N-methyltransferase (595 aa).

The disordered stretch occupies residues 1 to 22 (MGKKSRVKTQKSGTGATATVSP). Polar residues predominate over residues 10 to 20 (QKSGTGATATV). S-adenosyl-L-methionine contacts are provided by residues arginine 75, 104–106 (EGF), arginine 254, 275–279 (DMCNH), and 325–327 (SGF). In terms of domain architecture, SET spans 94-314 (EGFEMVNFKE…AGEQIYIFYG (221 aa)). Serine 513 bears the Phosphoserine mark. A compositionally biased stretch (polar residues) spans 549-572 (ENGLVNGENSVPNGTRSENENLNQ). Positions 549-595 (ENGLVNGENSVPNGTRSENENLNQEESKRAVEDAKGSSSDNTAEVKE) are disordered. Residues 573-583 (EESKRAVEDAK) are compositionally biased toward basic and acidic residues. A compositionally biased stretch (polar residues) spans 584–595 (GSSSDNTAEVKE).

Belongs to the class V-like SAM-binding methyltransferase superfamily. SETD3 actin-histidine methyltransferase family. In terms of assembly, interacts with MYOD1. Post-translationally, phosphorylated by GSK3B, which is required for recognition by the SCF(FBXW7) complex and subsequent degradation. In terms of processing, ubiquitinated by the SCF(FBXW7) complex following phosphorylation by GSK3B, leading to its degradation by the proteasome.

Its subcellular location is the cytoplasm. The protein resides in the nucleus. It carries out the reaction L-histidyl-[protein] + S-adenosyl-L-methionine = N(tele)-methyl-L-histidyl-[protein] + S-adenosyl-L-homocysteine + H(+). Its function is as follows. Protein-histidine N-methyltransferase that specifically mediates 3-methylhistidine (tele-methylhistidine) methylation of actin at 'His-73'. Histidine methylation of actin is required for smooth muscle contraction of the laboring uterus during delivery. Does not have protein-lysine N-methyltransferase activity and probably only catalyzes histidine methylation of actin. This is Actin-histidine N-methyltransferase from Papio anubis (Olive baboon).